The chain runs to 289 residues: Purine nucleoside phosphorylase (289 aa).

N-acetylmethionine is present on M1. Residues S33, H64, and 84 to 86 (RFH) contribute to the phosphate site. Residue Y88 participates in a purine D-ribonucleoside binding. A116 is a binding site for phosphate. E201 and M219 together coordinate a purine D-ribonucleoside. S220 lines the phosphate pocket. A purine D-ribonucleoside is bound at residue N243. The residue at position 251 (S251) is a Phosphoserine. H257 serves as a coordination point for a purine D-ribonucleoside.

Belongs to the PNP/MTAP phosphorylase family. As to quaternary structure, homotrimer.

The protein localises to the cytoplasm. It carries out the reaction inosine + phosphate = alpha-D-ribose 1-phosphate + hypoxanthine. The catalysed reaction is guanosine + phosphate = alpha-D-ribose 1-phosphate + guanine. The enzyme catalyses 2'-deoxyguanosine + phosphate = 2-deoxy-alpha-D-ribose 1-phosphate + guanine. It catalyses the reaction 2'-deoxyinosine + phosphate = 2-deoxy-alpha-D-ribose 1-phosphate + hypoxanthine. Its pathway is purine metabolism; purine nucleoside salvage. Its function is as follows. Catalyzes the phosphorolytic breakdown of the N-glycosidic bond in the beta-(deoxy)ribonucleoside molecules, with the formation of the corresponding free purine bases and pentose-1-phosphate. Preferentially acts on 6-oxopurine nucleosides including inosine and guanosine. In Bos taurus (Bovine), this protein is Purine nucleoside phosphorylase (PNP).